The following is a 359-amino-acid chain: MISKLSVNPTFSPSYNIIVDSVLDFSHILEYVTNKQVLVVTNTTVAKLYLTKFLAALVDDLDVRTCILEDGEQYKSQQSLDKILSTLLENHFTRNSTVLVALGGGVIGDITGFAAAIYQRGIDFIQIPTTLLSQVDSSVGGKTAINHQLGKNMIGAFYQPKVVYTSIEFYKTLPQREYIAGMAEVVKYAFISKDFYLWLDSNRDKILAKDSVTLIEMVKRSCQIKAQVVAMDEKELTGARAILNFGHTFGHAIEKCQNYRGLKHGEAVGVGMAQAIDFSHYLGLISQQQAKDFKDFIVSFGISIDFPNDICQKEFLEAMLLDKKNSNKELKFILIENIGSLSLQKQSKNELEQFLDISR.

NAD(+) is bound by residues 70–75 (DGEQYK), 105–109 (GVIGD), 129–130 (TT), K142, K151, and 169–172 (FYKT). 3 residues coordinate Zn(2+): E184, H247, and H264.

It belongs to the sugar phosphate cyclases superfamily. Dehydroquinate synthase family. It depends on Co(2+) as a cofactor. Requires Zn(2+) as cofactor. The cofactor is NAD(+).

It is found in the cytoplasm. It catalyses the reaction 7-phospho-2-dehydro-3-deoxy-D-arabino-heptonate = 3-dehydroquinate + phosphate. The protein operates within metabolic intermediate biosynthesis; chorismate biosynthesis; chorismate from D-erythrose 4-phosphate and phosphoenolpyruvate: step 2/7. Catalyzes the conversion of 3-deoxy-D-arabino-heptulosonate 7-phosphate (DAHP) to dehydroquinate (DHQ). The sequence is that of 3-dehydroquinate synthase from Francisella tularensis subsp. holarctica (strain FTNF002-00 / FTA).